The chain runs to 624 residues: MRGPCCWPLSLLLLFLQSWETQLQSAGPRCYNGPLDLVFMIDSSRSVRPFEFETMRQFLVGLLRSLDVGLNATRVGVIQYSSQVQSVFPLGAFSRREDMERAIRAVVPLAQGTMTGLAIQYAMNVAFSEAEGARPSEERVPRVLVIVTDGRPQDRVAEVAAQARARGIEIYAVGVQRADVGSLRTMASPPLDQHVFLVESFDLIQEFGLQFQGRLCGKDLCAELVHGCQHLCVNAPGTFYCACNSGYKLAPDNKNCLALDLCAEGTHGCEHLCVNSVDSYFCRCRAGFALQQDQRSCRAIDYCSFGNHSCQHECVSTLAGPQCRCREGHDLLPDGRSCRVRDFCNGVDHGCEFQCVSEGLSFHCLCPEGRRLQADGKSCDRCREGHVDLVLLVDGSKSVRPQNFELVKRFVNQIVDFLDVSPEGTRVGLVQFSSRVRTEFPLGRYGTAAEVKQAVLAVEYMERGTMTGLALRHMVEHSFSEAQGARPRDLNVPRVGLVFTDGRSQDDISVWAARAKEEGIVMYAVGVGKAVEEELREIASEPSELHVSYSPDFSTMTHLLENLKGSICPEEGIGAGTELRSPCECESLVEFQGRTLGALESLTQNLARLTERLEELENQLASRK.

A signal peptide spans 1-21 (MRGPCCWPLSLLLLFLQSWET). Residues 36–215 (DLVFMIDSSR…EFGLQFQGRL (180 aa)) form the VWFA 1 domain. An N-linked (GlcNAc...) asparagine glycan is attached at N71. EGF-like domains are found at residues 217-257 (GKDL…KNCL), 258-298 (ALDL…RSCR), 299-339 (AIDY…RSCR), and 340-380 (VRDF…KSCD). 12 disulfide bridges follow: C221–C232, C228–C241, C243–C256, C262–C273, C269–C282, C284–C297, C303–C314, C310–C323, C325–C338, C344–C355, C351–C364, and C366–C379. N-linked (GlcNAc...) asparagine glycosylation is present at N307. In terms of domain architecture, VWFA 2 spans 388–563 (DLVLLVDGSK…STMTHLLENL (176 aa)). A coiled-coil region spans residues 590-623 (EFQGRTLGALESLTQNLARLTERLEELENQLASR).

Interacts with COMP. As to expression, lung, brain, sternum, kidney and heart.

It localises to the secreted. Major component of the extracellular matrix of cartilage. This Mus musculus (Mouse) protein is Matrilin-4 (Matn4).